We begin with the raw amino-acid sequence, 479 residues long: Glutamate--tRNA ligase (479 aa).

The short motif at 9-19 is the 'HIGH' region element; it reads PSPTGNLHIGT. A 'KMSKS' region motif is present at residues 243-247; it reads KLSKR. K246 serves as a coordination point for ATP.

It belongs to the class-I aminoacyl-tRNA synthetase family. Glutamate--tRNA ligase type 1 subfamily. Monomer.

The protein resides in the cytoplasm. It catalyses the reaction tRNA(Glu) + L-glutamate + ATP = L-glutamyl-tRNA(Glu) + AMP + diphosphate. Functionally, catalyzes the attachment of glutamate to tRNA(Glu) in a two-step reaction: glutamate is first activated by ATP to form Glu-AMP and then transferred to the acceptor end of tRNA(Glu). This Synechococcus sp. (strain JA-3-3Ab) (Cyanobacteria bacterium Yellowstone A-Prime) protein is Glutamate--tRNA ligase.